The sequence spans 506 residues: Zinc finger protein 157 (506 aa).

In terms of domain architecture, KRAB spans 27–98 (VSFEDVAVDF…EEESSGHGYS (72 aa)). C2H2-type zinc fingers lie at residues 162–184 (FECH…LRIH), 190–212 (YECG…QKTH), 218–240 (FECN…TRTH), 246–268 (YECT…QRTH), 274–296 (YECS…HRTH), 302–324 (YECG…QRIH), 330–352 (YECG…QRTH), 358–380 (YQCN…QRIH), 386–408 (YECN…QRMH), 414–436 (YECS…RRTH), 442–464 (YECS…QRIH), and 470–492 (FECQ…QRTH).

It belongs to the krueppel C2H2-type zinc-finger protein family.

The protein localises to the nucleus. May be involved in transcriptional regulation. The protein is Zinc finger protein 157 (ZNF157) of Homo sapiens (Human).